The primary structure comprises 233 residues: MYRVVTIEEVWDVAKDVKAFRFNENIEFAPGQFIMAWLPGVGEKPFSLAWEDMIVVKRVGPFTTKLFELKEGDRLWIRGPYGHGFIKRGEKVALVGGGIGIPPLYAFAKKNQGKFRQMTLIYGARSKDELSLLDIENYVDDAVITTDDGSAGRKGFPTEVLAERREEFDQVYACGPEPMLKAVLKVMNYKNVQISAERYMKCGIGVCGSCNLGKYLVCRDGPVFEGEKLVGLL.

The FAD-binding FR-type domain maps to 1–87; the sequence is MYRVVTIEEV…RGPYGHGFIK (87 aa). Cys-202, Cys-207, Cys-210, and Cys-218 together coordinate [2Fe-2S] cluster.

Belongs to the PyrK family. In terms of assembly, heterotetramer of 2 PyrK and 2 PyrD type B subunits. The cofactor is [2Fe-2S] cluster. Requires FAD as cofactor.

The protein operates within pyrimidine metabolism; UMP biosynthesis via de novo pathway; orotate from (S)-dihydroorotate (NAD(+) route): step 1/1. In terms of biological role, responsible for channeling the electrons from the oxidation of dihydroorotate from the FMN redox center in the PyrD type B subunit to the ultimate electron acceptor NAD(+). The chain is Probable dihydroorotate dehydrogenase B (NAD(+)), electron transfer subunit from Thermococcus kodakarensis (strain ATCC BAA-918 / JCM 12380 / KOD1) (Pyrococcus kodakaraensis (strain KOD1)).